The following is a 51-amino-acid chain: MAPPQHLCGSHLVDALYLVCGDRGFFYNPKGIVEQCCHRPCDIFDLQSYCN.

Disulfide bonds link cysteine 8/cysteine 37, cysteine 20/cysteine 50, and cysteine 36/cysteine 41.

It belongs to the insulin family. Heterodimer of a B chain and an A chain linked by two disulfide bonds.

The protein resides in the secreted. In terms of biological role, insulin decreases blood glucose concentration. It increases cell permeability to monosaccharides, amino acids and fatty acids. It accelerates glycolysis, the pentose phosphate cycle, and glycogen synthesis in liver. In Batrachoididae sp. (Toadfish), this protein is Insulin-1 (ins1).